The following is a 195-amino-acid chain: HTH-type transcriptional regulator BetI (195 aa).

Residues 8 to 68 (EIRRAQLIDA…ATMRHVLRDL (61 aa)) enclose the HTH tetR-type domain. A DNA-binding region (H-T-H motif) is located at residues 31–50 (TLASVAQRANISTGIVSHYF).

Its pathway is amine and polyamine biosynthesis; betaine biosynthesis via choline pathway [regulation]. Its function is as follows. Repressor involved in the biosynthesis of the osmoprotectant glycine betaine. It represses transcription of the choline transporter BetT and the genes of BetAB involved in the synthesis of glycine betaine. This chain is HTH-type transcriptional regulator BetI, found in Burkholderia thailandensis (strain ATCC 700388 / DSM 13276 / CCUG 48851 / CIP 106301 / E264).